Reading from the N-terminus, the 398-residue chain is MAENFSWLHRGIAEVFPQPTDAESDIESLEKRLATTDRPLRVKYGIDPTGADIHLGHSIPMRKLRGFQDAGHTAVLIIGDFTARIGDPTGKSEMRRQLTEEDVKQNAQTYLDQVRPILDFDTPGRLEVRYNSEWLSRLDLGKITELLATMTVGQMLAKEGFADRYKKENPIFLHEFLYPLMQGYDSVAIEADVELGGTDQKFNIAVGRDLQRHFGQKPQFGVLLPILIGTDGVQKMSKSLGNYVSLSEHPGQKYQKLQGVPDVLLKDYFELLTNLPIDALPENPRDRQMLLAWEIVKQYHGEQAANEAKEAAQSGGKEGAVPEFSLSNVSQFPVKLAYLLGATGLCKSTGEGKRKIQEGGVRLDGDRISDADTTFQQPDELQGRVLQVGKNKFMRLVP.

A 'HIGH' region motif is present at residues 48–57; it reads PTGADIHLGH. The 'KMSKS' region signature appears at 235 to 239; sequence KMSKS. Lys-238 contacts ATP. Residues 334–398 enclose the S4 RNA-binding domain; that stretch reads VKLAYLLGAT…GKNKFMRLVP (65 aa).

The protein belongs to the class-I aminoacyl-tRNA synthetase family. TyrS type 2 subfamily. Homodimer.

The protein localises to the cytoplasm. It carries out the reaction tRNA(Tyr) + L-tyrosine + ATP = L-tyrosyl-tRNA(Tyr) + AMP + diphosphate + H(+). In terms of biological role, catalyzes the attachment of tyrosine to tRNA(Tyr) in a two-step reaction: tyrosine is first activated by ATP to form Tyr-AMP and then transferred to the acceptor end of tRNA(Tyr). In Nostoc sp. (strain PCC 7120 / SAG 25.82 / UTEX 2576), this protein is Tyrosine--tRNA ligase.